We begin with the raw amino-acid sequence, 84 residues long: uncharacterized protein (84 aa).

This is an uncharacterized protein from Orgyia pseudotsugata multicapsid polyhedrosis virus (OpMNPV).